We begin with the raw amino-acid sequence, 279 residues long: Elongation factor Ts (279 aa).

Residues 79-82 (TDFV) form an involved in Mg(2+) ion dislocation from EF-Tu region.

It belongs to the EF-Ts family.

The protein resides in the cytoplasm. In terms of biological role, associates with the EF-Tu.GDP complex and induces the exchange of GDP to GTP. It remains bound to the aminoacyl-tRNA.EF-Tu.GTP complex up to the GTP hydrolysis stage on the ribosome. The protein is Elongation factor Ts of Phytoplasma mali (strain AT).